The primary structure comprises 332 residues: Elongin-A (332 aa).

The F-box domain maps to L24–L68. Positions T228–R332 are disordered. The segment covering L296 to Q309 has biased composition (polar residues). A compositionally biased stretch (basic residues) spans P320 to R332.

It belongs to the ELA1 family. As to quaternary structure, heterodimer with ELC1. Component of a CRL3 E3 ubiquitin ligase complex consisting of a cullin, the linker protein ELC1, the substrate receptor ELA1, and a RING protein. Interacts with the large RNA polymerase II subunit RPO21 in a manner dependent on DEF1.

In terms of biological role, as part of the CRL3 E3 ubiquitin ligase complex; polyubiquitylates monoubiquitylated RNA polymerase II subunit RPO21 to trigger its proteolysis; plays a role in global genomic repair. This is Elongin-A (ELA1) from Eremothecium gossypii (strain ATCC 10895 / CBS 109.51 / FGSC 9923 / NRRL Y-1056) (Yeast).